The primary structure comprises 611 residues: Procollagen galactosyltransferase 1-B (611 aa).

The signal sequence occupies residues 1-24 (MSQAGVERLLKGLQILVLVLRLSA). N-linked (GlcNAc...) asparagine glycans are attached at residues asparagine 85, asparagine 173, asparagine 370, asparagine 373, and asparagine 568. Over residues 576–591 (DRAKSRKTHQQEKLRS) the composition is skewed to basic and acidic residues. The tract at residues 576–611 (DRAKSRKTHQQEKLRSEALNTPSMGSPFDNTARDEL) is disordered. The Prevents secretion from ER motif lies at 608–611 (RDEL).

Belongs to the glycosyltransferase 25 family.

Its subcellular location is the endoplasmic reticulum lumen. The catalysed reaction is (5R)-5-hydroxy-L-lysyl-[collagen] + UDP-alpha-D-galactose = (5R)-5-O-(beta-D-galactosyl)-5-hydroxy-L-lysyl-[collagen] + UDP + H(+). Beta-galactosyltransferase that transfers beta-galactose to hydroxylysine residues of type I collagen. By acting on collagen glycosylation, facilitates the formation of collagen triple helix. In Xenopus laevis (African clawed frog), this protein is Procollagen galactosyltransferase 1-B (colgalt1-b).